The chain runs to 313 residues: Ribosomal RNA small subunit methyltransferase H (313 aa).

Residues 35–37 (GGH), D55, F79, D101, and Q108 each bind S-adenosyl-L-methionine.

The protein belongs to the methyltransferase superfamily. RsmH family.

The protein resides in the cytoplasm. It catalyses the reaction cytidine(1402) in 16S rRNA + S-adenosyl-L-methionine = N(4)-methylcytidine(1402) in 16S rRNA + S-adenosyl-L-homocysteine + H(+). Functionally, specifically methylates the N4 position of cytidine in position 1402 (C1402) of 16S rRNA. The sequence is that of Ribosomal RNA small subunit methyltransferase H from Escherichia coli O127:H6 (strain E2348/69 / EPEC).